The primary structure comprises 73 residues: Sec-independent protein translocase protein TatA (73 aa).

A helical transmembrane segment spans residues 1 to 21; it reads MGSFSIGHWLIVLAIIVLLFG. Residues 43 to 73 are disordered; that stretch reads MEDTTPEKSEKVEHKEESATSQKIEETTKNA.

It belongs to the TatA/E family. In terms of assembly, the Tat system comprises two distinct complexes: a TatABC complex, containing multiple copies of TatA, TatB and TatC subunits, and a separate TatA complex, containing only TatA subunits. Substrates initially bind to the TatABC complex, which probably triggers association of the separate TatA complex to form the active translocon.

It is found in the cell inner membrane. Functionally, part of the twin-arginine translocation (Tat) system that transports large folded proteins containing a characteristic twin-arginine motif in their signal peptide across membranes. TatA could form the protein-conducting channel of the Tat system. In Campylobacter concisus (strain 13826), this protein is Sec-independent protein translocase protein TatA.